A 32-amino-acid chain; its full sequence is ilv operon leader peptide (32 aa).

The sequence is that of ilv operon leader peptide (ilvL) from Edwardsiella tarda.